We begin with the raw amino-acid sequence, 93 residues long: uncharacterized protein (93 aa).

This is an uncharacterized protein from Enterobacter agglomerans (Erwinia herbicola).